Here is a 197-residue protein sequence, read N- to C-terminus: Ribonuclease HII (197 aa).

An RNase H type-2 domain is found at 11–197; that stretch reads HLIAGVDEVG…FAPVKKILGL (187 aa). Positions 17, 18, and 109 each coordinate a divalent metal cation.

The protein belongs to the RNase HII family. Mn(2+) is required as a cofactor. Requires Mg(2+) as cofactor.

It is found in the cytoplasm. It carries out the reaction Endonucleolytic cleavage to 5'-phosphomonoester.. Its function is as follows. Endonuclease that specifically degrades the RNA of RNA-DNA hybrids. This Actinobacillus pleuropneumoniae serotype 5b (strain L20) protein is Ribonuclease HII.